The following is a 365-amino-acid chain: Cobalt-precorrin-5B C(1)-methyltransferase (365 aa).

The protein belongs to the CbiD family.

It carries out the reaction Co-precorrin-5B + S-adenosyl-L-methionine = Co-precorrin-6A + S-adenosyl-L-homocysteine. Its pathway is cofactor biosynthesis; adenosylcobalamin biosynthesis; cob(II)yrinate a,c-diamide from sirohydrochlorin (anaerobic route): step 6/10. Catalyzes the methylation of C-1 in cobalt-precorrin-5B to form cobalt-precorrin-6A. In Clostridium perfringens (strain ATCC 13124 / DSM 756 / JCM 1290 / NCIMB 6125 / NCTC 8237 / Type A), this protein is Cobalt-precorrin-5B C(1)-methyltransferase.